Consider the following 614-residue polypeptide: UPF0329 protein ECU03_0090 (614 aa).

Composition is skewed to basic and acidic residues over residues 317–338 (EREE…EESL) and 345–354 (LRMEEKEKSK). Residues 317–420 (EREEAEKMRG…KKSRSKGHRY (104 aa)) form a disordered region. Over residues 355–364 (SRGKKKKGGK) the composition is skewed to basic residues. Residues 372–381 (AKMEEEKKDS) are compositionally biased toward basic and acidic residues. A compositionally biased stretch (acidic residues) spans 382-394 (EEVEESAEAEVSL). Basic residues predominate over residues 408-420 (SSKKKSRSKGHRY).

Belongs to the UPF0329 family.

In Encephalitozoon cuniculi (strain GB-M1) (Microsporidian parasite), this protein is UPF0329 protein ECU03_0090.